Reading from the N-terminus, the 128-residue chain is Ribonuclease pancreatic B (128 aa).

A disordered region spans residues alanine 1–asparagine 21. 2 residues coordinate substrate: lysine 7 and arginine 10. Histidine 12 serves as the catalytic Proton acceptor. N-linked (GlcNAc...) asparagine glycans are attached at residues asparagine 21 and asparagine 34. 4 disulfides stabilise this stretch: cysteine 26/cysteine 84, cysteine 40/cysteine 95, cysteine 58/cysteine 110, and cysteine 65/cysteine 72. Residues lysine 41–threonine 45, lysine 66, and arginine 85 each bind substrate. The active-site Proton donor is histidine 119.

The protein belongs to the pancreatic ribonuclease family. Pancreas.

Its subcellular location is the secreted. The catalysed reaction is an [RNA] containing cytidine + H2O = an [RNA]-3'-cytidine-3'-phosphate + a 5'-hydroxy-ribonucleotide-3'-[RNA].. It carries out the reaction an [RNA] containing uridine + H2O = an [RNA]-3'-uridine-3'-phosphate + a 5'-hydroxy-ribonucleotide-3'-[RNA].. This Cavia porcellus (Guinea pig) protein is Ribonuclease pancreatic B.